We begin with the raw amino-acid sequence, 423 residues long: Probable baseplate hub protein gp334 (423 aa).

As to quaternary structure, homotrimer. Interacts with gp5 trimer.

The protein resides in the virion. Its function is as follows. Baseplate protein that is part of the baseplate hub. Involved in the tail assembly. This chain is Probable baseplate hub protein gp334, found in Vibrio parahaemolyticus (KVP40).